Here is a 592-residue protein sequence, read N- to C-terminus: Aspartate--tRNA(Asp/Asn) ligase (592 aa).

L-aspartate is bound at residue Glu173. The interval 197-200 (QLFK) is aspartate. Residue Arg219 participates in L-aspartate binding. ATP contacts are provided by residues 219 to 221 (RDE) and Gln228. Position 448 (His448) interacts with L-aspartate. Glu481 provides a ligand contact to ATP. L-aspartate is bound at residue Arg488. Residue 533–536 (GLDR) coordinates ATP.

This sequence belongs to the class-II aminoacyl-tRNA synthetase family. Type 1 subfamily. In terms of assembly, homodimer.

The protein resides in the cytoplasm. The enzyme catalyses tRNA(Asx) + L-aspartate + ATP = L-aspartyl-tRNA(Asx) + AMP + diphosphate. In terms of biological role, aspartyl-tRNA synthetase with relaxed tRNA specificity since it is able to aspartylate not only its cognate tRNA(Asp) but also tRNA(Asn). Reaction proceeds in two steps: L-aspartate is first activated by ATP to form Asp-AMP and then transferred to the acceptor end of tRNA(Asp/Asn). The polypeptide is Aspartate--tRNA(Asp/Asn) ligase (Chromohalobacter salexigens (strain ATCC BAA-138 / DSM 3043 / CIP 106854 / NCIMB 13768 / 1H11)).